Consider the following 349-residue polypeptide: Sesquiterpene synthase MAC_05714 (349 aa).

The Mg(2+) site is built by Asp91 and Asp96. The short motif at 91-96 (DDLFVD) is the DDXXXD motif element. Arg184 lines the substrate pocket. Mg(2+) contacts are provided by Asn230, Ser234, and Glu238.

Belongs to the terpene synthase family. Mg(2+) serves as cofactor.

The enzyme catalyses (2E,6E)-farnesyl diphosphate + H2O = (+)-corvol ether B + diphosphate. It catalyses the reaction (2E,6E)-farnesyl diphosphate + H2O = (+)-corvol ether A + diphosphate. Its function is as follows. Terpene synthase that catalyzes the conversion of (2E,6E)-farnesyl diphosphate (FPP) into sesquiterpenes which are important for fungi-environment interactions. Produces a mixture consisting of 8 sesquiterpenes including corvol ethers A and B, as well as traces of epizonarene, gamma-cadinene, delta-cadinene, alpha-cadinene, alpha-cadinol, and an unidentified sesquiterpene. Produces both corvol ether A and corvol ether B in similar concentrations. The sequence is that of Sesquiterpene synthase MAC_05714 from Metarhizium acridum (strain CQMa 102).